The primary structure comprises 115 residues: UPF0738 protein SAV1005 (115 aa).

This sequence belongs to the UPF0738 family.

In Staphylococcus aureus (strain Mu50 / ATCC 700699), this protein is UPF0738 protein SAV1005.